Consider the following 283-residue polypeptide: Bifunctional protein FolD (283 aa).

NADP(+) is bound by residues 157–159 (GNG) and Ile-224.

It belongs to the tetrahydrofolate dehydrogenase/cyclohydrolase family. In terms of assembly, homodimer.

It catalyses the reaction (6R)-5,10-methylene-5,6,7,8-tetrahydrofolate + NADP(+) = (6R)-5,10-methenyltetrahydrofolate + NADPH. It carries out the reaction (6R)-5,10-methenyltetrahydrofolate + H2O = (6R)-10-formyltetrahydrofolate + H(+). It participates in one-carbon metabolism; tetrahydrofolate interconversion. Functionally, catalyzes the oxidation of 5,10-methylenetetrahydrofolate to 5,10-methenyltetrahydrofolate and then the hydrolysis of 5,10-methenyltetrahydrofolate to 10-formyltetrahydrofolate. The polypeptide is Bifunctional protein FolD (Mycoplasmoides gallisepticum (strain R(low / passage 15 / clone 2)) (Mycoplasma gallisepticum)).